The following is a 144-amino-acid chain: MRVGFVFALLVVSVIVCFNGLTSAESTVVMNNRNPDSINVPISDDITSRNLRASGEERAYAFVDKIKSLFSRPGISQKVESLQKNPAMVKNLEKAALSQKGSSKVRDWFMHMYNNSSKRDKFFILATLVMFPIGVWAVVTNYRR.

The signal sequence occupies residues 1 to 24 (MRVGFVFALLVVSVIVCFNGLTSA). Positions 49 to 58 (RNLRASGEER) match the RxLR-dEER motif. Asn-115 carries an N-linked (GlcNAc...) asparagine glycan. A helical transmembrane segment spans residues 122-142 (FFILATLVMFPIGVWAVVTNY).

This sequence belongs to the RxLR effector family. Interacts with the C-terminal portions the ER-associated potato NAC transcription factors NTP1 and NTP2.

The protein resides in the secreted. It localises to the host endoplasmic reticulum membrane. In terms of biological role, effector that is required for full virulence. Targets host NTP1 and NTP2 transcription factors and prevents their pathogen-associated molecular pattern (PAMP)-triggered re-localization from the endoplasmic reticulum into the nucleus, where they contribute to prevent disease progression by P.infestans. This chain is RxLR effector protein PITG_03192, found in Phytophthora infestans (strain T30-4) (Potato late blight agent).